The sequence spans 259 residues: DNA-directed RNA polymerase subunit Rpo3 (259 aa).

It belongs to the archaeal Rpo3/eukaryotic RPB3 RNA polymerase subunit family. Part of the RNA polymerase complex.

The protein localises to the cytoplasm. It carries out the reaction RNA(n) + a ribonucleoside 5'-triphosphate = RNA(n+1) + diphosphate. DNA-dependent RNA polymerase (RNAP) catalyzes the transcription of DNA into RNA using the four ribonucleoside triphosphates as substrates. In Pyrococcus horikoshii (strain ATCC 700860 / DSM 12428 / JCM 9974 / NBRC 100139 / OT-3), this protein is DNA-directed RNA polymerase subunit Rpo3.